The sequence spans 453 residues: tRNA modification GTPase MnmE (453 aa).

Arg-22, Glu-79, and Lys-119 together coordinate (6S)-5-formyl-5,6,7,8-tetrahydrofolate. The region spanning 215 to 376 (GMKVVIAGRP…LQQHLKSLMG (162 aa)) is the TrmE-type G domain. A K(+)-binding site is contributed by Asn-225. Residues 225-230 (NAGKSS), 244-250 (TEIAGTT), 269-272 (DTAG), and 334-337 (NKAD) contribute to the GTP site. A Mg(2+)-binding site is contributed by Ser-229. Thr-244, Ile-246, and Thr-249 together coordinate K(+). Residue Thr-250 coordinates Mg(2+). (6S)-5-formyl-5,6,7,8-tetrahydrofolate is bound at residue Lys-453.

The protein belongs to the TRAFAC class TrmE-Era-EngA-EngB-Septin-like GTPase superfamily. TrmE GTPase family. As to quaternary structure, homodimer. Heterotetramer of two MnmE and two MnmG subunits. The cofactor is K(+).

The protein resides in the cytoplasm. Exhibits a very high intrinsic GTPase hydrolysis rate. Involved in the addition of a carboxymethylaminomethyl (cmnm) group at the wobble position (U34) of certain tRNAs, forming tRNA-cmnm(5)s(2)U34. This chain is tRNA modification GTPase MnmE, found in Shewanella sediminis (strain HAW-EB3).